Consider the following 209-residue polypeptide: Glutathione S-transferase D1 (209 aa).

In terms of domain architecture, GST N-terminal spans 1–81 (MVDFYYLPGS…YLVEKYGKTD (81 aa)). Glutathione-binding positions include Ser-10, 51 to 53 (HTI), and 65 to 67 (ESR). The GST C-terminal domain occupies 87–208 (CPKKRAVINQ…AGCLEFKKYF (122 aa)).

The protein belongs to the GST superfamily. Delta family. Homodimer.

The catalysed reaction is RX + glutathione = an S-substituted glutathione + a halide anion + H(+). It carries out the reaction 1,1,1-trichloro-2,2-bis(4-chlorophenyl)ethane = 1,1-dichloro-2,2-bis(4-chlorophenyl)ethylene + chloride + H(+). Its function is as follows. Conjugation of reduced glutathione to a wide number of exogenous and endogenous hydrophobic electrophiles. Has DDT dehydrochlorinase activity. May be involved in detoxification. This chain is Glutathione S-transferase D1, found in Drosophila melanogaster (Fruit fly).